The sequence spans 340 residues: Tryptophan--tRNA ligase (340 aa).

ATP is bound by residues 11–13 and 19–20; these read RPT and GH. The 'HIGH' region signature appears at 12 to 20; that stretch reads PTGKLHLGH. Asp140 is an L-tryptophan binding site. ATP-binding positions include 152–154, Leu194, and 202–206; these read GND and KMSKS. A 'KMSKS' region motif is present at residues 202 to 206; that stretch reads KMSKS.

It belongs to the class-I aminoacyl-tRNA synthetase family. As to quaternary structure, homodimer.

The protein localises to the cytoplasm. The enzyme catalyses tRNA(Trp) + L-tryptophan + ATP = L-tryptophyl-tRNA(Trp) + AMP + diphosphate + H(+). Catalyzes the attachment of tryptophan to tRNA(Trp). In Streptococcus pyogenes serotype M1, this protein is Tryptophan--tRNA ligase.